The sequence spans 383 residues: Putative dehydratase subunit YjiM (383 aa).

Belongs to the FldB/FldC dehydratase alpha/beta subunit family.

The chain is Putative dehydratase subunit YjiM (yjiM) from Escherichia coli (strain K12).